Reading from the N-terminus, the 57-residue chain is MYKCVPSYYSKAGTIVVTYCEISALLVSLKNRVQGKRGETEGQIEISRKAGHPAPAF.

The disordered stretch occupies residues 34–57 (QGKRGETEGQIEISRKAGHPAPAF).

This is an uncharacterized protein from Saccharomyces cerevisiae (strain ATCC 204508 / S288c) (Baker's yeast).